The following is a 134-amino-acid chain: Small ribosomal subunit protein uS11 (134 aa).

The segment covering 113–122 (SSITDATPQP) has biased composition (polar residues). The interval 113 to 134 (SSITDATPQPHNGCRPTKRRKV) is disordered.

This sequence belongs to the universal ribosomal protein uS11 family. In terms of assembly, part of the 30S ribosomal subunit. Interacts with proteins S7 and S18. Binds to IF-3.

Located on the platform of the 30S subunit, it bridges several disparate RNA helices of the 16S rRNA. Forms part of the Shine-Dalgarno cleft in the 70S ribosome. The chain is Small ribosomal subunit protein uS11 from Corynebacterium aurimucosum (strain ATCC 700975 / DSM 44827 / CIP 107346 / CN-1) (Corynebacterium nigricans).